The following is a 126-amino-acid chain: KH homology domain-containing protein 1B (126 aa).

Positions 19 to 78 constitute a KH domain; that stretch reads PLVFDMEEDQEDYIFGPDDEYLHTLEVHSNTLIQLERWFSPTGQTRVTVVGPLKARLWVM.

The protein belongs to the KHDC1 family.

The sequence is that of KH homology domain-containing protein 1B (Khdc1b) from Mus musculus (Mouse).